We begin with the raw amino-acid sequence, 1503 residues long: ATP-binding cassette sub-family C member 6 (1503 aa).

Residues 1–31 (MAAPAEPCAGQGVWNQTEPEPAATSLLSLCF) are Extracellular-facing. A glycan (N-linked (GlcNAc...) asparagine) is linked at N15. A helical transmembrane segment spans residues 32–52 (LRTAGVWVPPMYLWVLGPIYL). At 53–72 (LFIHHHGRGYLRMSPLFKAK) the chain is on the cytoplasmic side. The chain crosses the membrane as a helical span at residues 73–93 (MVLGFALIVLCTSSVAVALWK). Residues 94-98 (IQQGT) lie on the Extracellular side of the membrane. A helical transmembrane segment spans residues 99–119 (PEAPEFLIHPTVWLTTMSFAV). The Cytoplasmic segment spans residues 120–131 (FLIHTERKKGVQ). The chain crosses the membrane as a helical span at residues 132 to 149 (SSGVLFGYWLLCFVLPAT). The Extracellular portion of the chain corresponds to 150 to 167 (NAAQQASGAGFQSDPVRH). The helical transmembrane segment at 168–188 (LSTYLCLSLVVAQFVLSCLAD) threads the bilayer. Residues 189–302 (QPPFFPEDPQ…GSQWRPLLKA (114 aa)) lie on the Cytoplasmic side of the membrane. The helical transmembrane segment at 303–323 (IWQVFHSTFLLGTLSLIISDV) threads the bilayer. One can recognise an ABC transmembrane type-1 1 domain in the interval 311–593 (FLLGTLSLII…LPFSIHSLVQ (283 aa)). At 324–349 (FRFTVPKLLSLFLEFIGDPKPPAWKG) the chain is on the extracellular side. The chain crosses the membrane as a helical span at residues 350–370 (YLLAVLMFLSACLQTLFEQQN). The Cytoplasmic segment spans residues 371–426 (MYRLKVLQMRLRSAITGLVYRKVLALSSGSRKASAVGDVVNLVSVDVQRLTESVLY). The chain crosses the membrane as a helical span at residues 427–447 (LNGLWLPLVWIVVCFVYLWQL). Topologically, residues 448–450 (LGP) are extracellular. A helical membrane pass occupies residues 451 to 471 (SALTAIAVFLSLLPLNFFISK). At 472–533 (KRNHHQEEQM…ALRTSGLLFS (62 aa)) the chain is on the cytoplasmic side. A helical membrane pass occupies residues 534–554 (VSLVSFQVSTFLVALVVFAVH). At 555–575 (TLVAENAMNAEKAFVTLTVLN) the chain is on the extracellular side. The helical transmembrane segment at 576-596 (ILNKAQAFLPFSIHSLVQARV) threads the bilayer. Residues 597-939 (SFDRLVTFLC…VKATVHLAYL (343 aa)) lie on the Cytoplasmic side of the membrane. One can recognise an ABC transporter 1 domain in the interval 629-853 (ITIHSATFAW…KGALMCLLDQ (225 aa)). 663–670 (GPVGAGKS) contributes to the ATP binding site. The interval 854 to 919 (ARQPGDRGEG…LDDPDRAGWP (66 aa)) is disordered. Positions 881–901 (RRPELRRERSIKSVPEKDRTT) are enriched in basic and acidic residues. The chain crosses the membrane as a helical span at residues 940 to 960 (RAVGTPLCLYALFLFLCQQVA). Positions 947–1228 (CLYALFLFLC…VVRNWTDLEN (282 aa)) constitute an ABC transmembrane type-1 2 domain. Over 961–997 (SFCRGYWLSLWADDPAVGGQQTQAALRGGIFGLLGCL) the chain is Extracellular. The helical transmembrane segment at 998–1018 (QAIGLFASMAAVLLGGARASR) threads the bilayer. Over 1019–1061 (LLFQRLLWDVVRSPISFFERTPIGHLLNRFSKETDTVDVDIPD) the chain is Cytoplasmic. The helical transmembrane segment at 1062–1082 (KLRSLLMYAFGLLEVSLVVAV) threads the bilayer. Residue A1083 is a topological domain, extracellular. Residues 1084–1104 (TPLATVAILPLFLLYAGFQSL) traverse the membrane as a helical segment. At 1105-1175 (YVVSSCQLRR…VADRWLAANV (71 aa)) the chain is on the cytoplasmic side. A helical membrane pass occupies residues 1176-1196 (ELLGNGLVFAAATCAVLSKAH). Topologically, residues 1197 to 1198 (LS) are extracellular. Residues 1199-1219 (AGLVGFSVSAALQVTQTLQWV) form a helical membrane-spanning segment. Over 1220–1503 (VRNWTDLENS…YRLAQESGLV (284 aa)) the chain is Cytoplasmic. The 235-residue stretch at 1265–1499 (IEFRDFGLRY…KGLFYRLAQE (235 aa)) folds into the ABC transporter 2 domain. At S1286 the chain carries Phosphoserine. 1299-1306 (GRTGAGKS) provides a ligand contact to ATP.

Belongs to the ABC transporter superfamily. ABCC family. Conjugate transporter (TC 3.A.1.208) subfamily. It depends on Mg(2+) as a cofactor. Glycosylated. In terms of tissue distribution, expressed in kidney and liver. Very low expression in other tissues. In testis, localized to peritubular myoid cells, Leydig cells, along the basal membrane of Sertoli cells and moderately in the adluminal compartment of the seminiferous tubules.

Its subcellular location is the basal cell membrane. It is found in the basolateral cell membrane. The protein resides in the endoplasmic reticulum membrane. The catalysed reaction is an S-substituted glutathione(in) + ATP + H2O = an S-substituted glutathione(out) + ADP + phosphate + H(+). The enzyme catalyses leukotriene C4(in) + ATP + H2O = leukotriene C4(out) + ADP + phosphate + H(+). With respect to regulation, LTC4 transport is completely inhibited by 1 mM orthovanadate. ATP-dependent transporter of the ATP-binding cassette (ABC) family that actively extrudes physiological compounds, and xenobiotics from cells. Mediates ATP-dependent transport of glutathione conjugates such as leukotriene-c4 (LTC4) and N-ethylmaleimide S-glutathione (NEM-GS) (in vitro), and an anionic cyclopentapeptide endothelin antagonist, BQ-123. May contribute to regulate the transport of organic compounds in testes across the blood-testis-barrier. Does not appear to actively transport drugs outside the cell. Confers low levels of cellular resistance to etoposide, teniposide, anthracyclines and cisplatin. Functionally, mediates the release of nucleoside triphosphates, predominantly ATP, into the circulation, where it is rapidly converted into AMP and the mineralization inhibitor inorganic pyrophosphate (PPi) by the ecto-enzyme ectonucleotide pyrophosphatase phosphodiesterase 1 (ENPP1), therefore playing a role in PPi homeostasis. In terms of biological role, inhibits TNF-alpha-mediated apoptosis through blocking one or more caspases. The polypeptide is ATP-binding cassette sub-family C member 6 (ABCC6) (Homo sapiens (Human)).